Here is a 321-residue protein sequence, read N- to C-terminus: Lipoyl synthase (321 aa).

[4Fe-4S] cluster-binding residues include cysteine 68, cysteine 73, cysteine 79, cysteine 94, cysteine 98, cysteine 101, and serine 308. A Radical SAM core domain is found at 80 to 297 (FNHGTATFMI…KELAESIGFT (218 aa)).

This sequence belongs to the radical SAM superfamily. Lipoyl synthase family. [4Fe-4S] cluster is required as a cofactor.

It localises to the cytoplasm. The catalysed reaction is [[Fe-S] cluster scaffold protein carrying a second [4Fe-4S](2+) cluster] + N(6)-octanoyl-L-lysyl-[protein] + 2 oxidized [2Fe-2S]-[ferredoxin] + 2 S-adenosyl-L-methionine + 4 H(+) = [[Fe-S] cluster scaffold protein] + N(6)-[(R)-dihydrolipoyl]-L-lysyl-[protein] + 4 Fe(3+) + 2 hydrogen sulfide + 2 5'-deoxyadenosine + 2 L-methionine + 2 reduced [2Fe-2S]-[ferredoxin]. It functions in the pathway protein modification; protein lipoylation via endogenous pathway; protein N(6)-(lipoyl)lysine from octanoyl-[acyl-carrier-protein]: step 2/2. Functionally, catalyzes the radical-mediated insertion of two sulfur atoms into the C-6 and C-8 positions of the octanoyl moiety bound to the lipoyl domains of lipoate-dependent enzymes, thereby converting the octanoylated domains into lipoylated derivatives. This chain is Lipoyl synthase, found in Shewanella halifaxensis (strain HAW-EB4).